Here is a 282-residue protein sequence, read N- to C-terminus: Shikimate dehydrogenase (NADP(+)) (282 aa).

Shikimate-binding positions include 15-17 and T62; that span reads SKS. The Proton acceptor role is filled by K66. 2 residues coordinate shikimate: N87 and D103. Residues 127 to 131, 151 to 156, and M220 contribute to the NADP(+) site; these read GAGGA and NRTHTK. Y222 is a shikimate binding site. Residue G244 coordinates NADP(+).

It belongs to the shikimate dehydrogenase family. In terms of assembly, homodimer.

It catalyses the reaction shikimate + NADP(+) = 3-dehydroshikimate + NADPH + H(+). The protein operates within metabolic intermediate biosynthesis; chorismate biosynthesis; chorismate from D-erythrose 4-phosphate and phosphoenolpyruvate: step 4/7. Involved in the biosynthesis of the chorismate, which leads to the biosynthesis of aromatic amino acids. Catalyzes the reversible NADPH linked reduction of 3-dehydroshikimate (DHSA) to yield shikimate (SA). This chain is Shikimate dehydrogenase (NADP(+)), found in Shewanella baltica (strain OS195).